The following is a 174-amino-acid chain: Ribosome maturation factor RimM (174 aa).

In terms of domain architecture, PRC barrel spans 91–164 (DDAWYPHQLQ…KVVLSPPGGL (74 aa)).

The protein belongs to the RimM family. As to quaternary structure, binds ribosomal protein uS19.

It localises to the cytoplasm. Its function is as follows. An accessory protein needed during the final step in the assembly of 30S ribosomal subunit, possibly for assembly of the head region. Essential for efficient processing of 16S rRNA. May be needed both before and after RbfA during the maturation of 16S rRNA. It has affinity for free ribosomal 30S subunits but not for 70S ribosomes. This Kineococcus radiotolerans (strain ATCC BAA-149 / DSM 14245 / SRS30216) protein is Ribosome maturation factor RimM.